We begin with the raw amino-acid sequence, 542 residues long: MDLEAVCKRSALHAKPQGLILQYGTAGFRTNAQHLDHIMFRMGLLAVLRSKQTRSTIGVMVTASHNPEEDNGVKLVDPLGEMLAPSWEEHATCLASAEEQDVRQVLAAIVEKEAVDLTQTAFVVIARDTRPSSEKLSQSVIDGVTVLGGQFHDYGLLTTPQLHYMVYCRNSGGRYGQATVEGYCQKLSKAFVDLTNQVSCSGDVKRSVKVDCANGIGALKLREMEHYFSRGLSVLLFNDGTQGRLNHLCGADFVKSQQKPPQGIEMKSGERCCSFDGDADRIVYYYCDADGHFHLIDGDKIATLISSFLKELLLEIGESVNLGVVQTAYANGSSTRYLEEVMKVPVYCTKTGVKHLHHKAQEFDIGVYFEANGHGTALFSEAVEVKIKRLAQELDDGKGKAARTLASIIDLFNQAAGDAISDMLVIEAILALKGLTVQQWDAIYVDLPNRQLKVKVADRRVISTTDAERQAVTPPGLQEAINDLVKKYTLARAFVRPSGTEDIVRVYAEANSQESADRLAYEVSLLVFQLAGGIGERPQPTF.

Methionine 1 is subject to N-acetylmethionine. Threonine 62 is modified (phosphothreonine). Serine 64 acts as the Phosphoserine intermediate in catalysis. Mg(2+) contacts are provided by serine 64, aspartate 276, aspartate 278, and aspartate 280. Phosphoserine is present on serine 64. Substrate is bound by residues 370–372, 496–500, and arginine 505; these read EAN and RPSGT.

Belongs to the phosphohexose mutase family. Mg(2+) serves as cofactor.

It catalyses the reaction N-acetyl-alpha-D-glucosamine 1-phosphate = N-acetyl-D-glucosamine 6-phosphate. It functions in the pathway nucleotide-sugar biosynthesis; UDP-N-acetyl-alpha-D-glucosamine biosynthesis; N-acetyl-alpha-D-glucosamine 1-phosphate from alpha-D-glucosamine 6-phosphate (route I): step 2/2. Catalyzes the conversion of GlcNAc-6-P into GlcNAc-1-P during the synthesis of uridine diphosphate/UDP-GlcNAc, a sugar nucleotide critical to multiple glycosylation pathways including protein N- and O-glycosylation. This Mus musculus (Mouse) protein is Phosphoacetylglucosamine mutase.